Reading from the N-terminus, the 157-residue chain is Molybdopterin synthase catalytic subunit (157 aa).

Residues 103–104, K119, and 126–128 contribute to the substrate site; these read HR and KKE.

The protein belongs to the MoaE family. MOCS2B subfamily. As to quaternary structure, heterotetramer; composed of 2 small (MOCS2A) and 2 large (MOCS2B) subunits.

The protein resides in the cytoplasm. It catalyses the reaction 2 [molybdopterin-synthase sulfur-carrier protein]-C-terminal-Gly-aminoethanethioate + cyclic pyranopterin phosphate + H2O = molybdopterin + 2 [molybdopterin-synthase sulfur-carrier protein]-C-terminal Gly-Gly + 2 H(+). It functions in the pathway cofactor biosynthesis; molybdopterin biosynthesis. Functionally, catalytic subunit of the molybdopterin synthase complex, a complex that catalyzes the conversion of precursor Z into molybdopterin. Acts by mediating the incorporation of 2 sulfur atoms from thiocarboxylated MOCS2A into precursor Z to generate a dithiolene group. This chain is Molybdopterin synthase catalytic subunit, found in Culex quinquefasciatus (Southern house mosquito).